The primary structure comprises 347 residues: Protein RecA (347 aa).

Position 64 to 71 (64 to 71 (GPESSGKT)) interacts with ATP.

Belongs to the RecA family.

The protein resides in the cytoplasm. Its function is as follows. Can catalyze the hydrolysis of ATP in the presence of single-stranded DNA, the ATP-dependent uptake of single-stranded DNA by duplex DNA, and the ATP-dependent hybridization of homologous single-stranded DNAs. It interacts with LexA causing its activation and leading to its autocatalytic cleavage. This chain is Protein RecA, found in Bartonella henselae (strain ATCC 49882 / DSM 28221 / CCUG 30454 / Houston 1) (Rochalimaea henselae).